Here is a 76-residue protein sequence, read N- to C-terminus: Small ribosomal subunit protein bS18 (76 aa).

This sequence belongs to the bacterial ribosomal protein bS18 family. In terms of assembly, part of the 30S ribosomal subunit. Forms a tight heterodimer with protein bS6.

Binds as a heterodimer with protein bS6 to the central domain of the 16S rRNA, where it helps stabilize the platform of the 30S subunit. The protein is Small ribosomal subunit protein bS18 of Nitrosomonas europaea (strain ATCC 19718 / CIP 103999 / KCTC 2705 / NBRC 14298).